We begin with the raw amino-acid sequence, 483 residues long: Glutamyl-tRNA(Gln) amidotransferase subunit A (483 aa).

Active-site charge relay system residues include K77 and S152. The active-site Acyl-ester intermediate is the S176.

Belongs to the amidase family. GatA subfamily. As to quaternary structure, heterotrimer of A, B and C subunits.

It carries out the reaction L-glutamyl-tRNA(Gln) + L-glutamine + ATP + H2O = L-glutaminyl-tRNA(Gln) + L-glutamate + ADP + phosphate + H(+). In terms of biological role, allows the formation of correctly charged Gln-tRNA(Gln) through the transamidation of misacylated Glu-tRNA(Gln) in organisms which lack glutaminyl-tRNA synthetase. The reaction takes place in the presence of glutamine and ATP through an activated gamma-phospho-Glu-tRNA(Gln). The sequence is that of Glutamyl-tRNA(Gln) amidotransferase subunit A from Listeria welshimeri serovar 6b (strain ATCC 35897 / DSM 20650 / CCUG 15529 / CIP 8149 / NCTC 11857 / SLCC 5334 / V8).